The sequence spans 352 residues: Phosphoribosylformylglycinamidine cyclo-ligase (352 aa).

This sequence belongs to the AIR synthase family.

It localises to the cytoplasm. It carries out the reaction 2-formamido-N(1)-(5-O-phospho-beta-D-ribosyl)acetamidine + ATP = 5-amino-1-(5-phospho-beta-D-ribosyl)imidazole + ADP + phosphate + H(+). It functions in the pathway purine metabolism; IMP biosynthesis via de novo pathway; 5-amino-1-(5-phospho-D-ribosyl)imidazole from N(2)-formyl-N(1)-(5-phospho-D-ribosyl)glycinamide: step 2/2. In Pseudomonas entomophila (strain L48), this protein is Phosphoribosylformylglycinamidine cyclo-ligase.